The following is a 28-amino-acid chain: Potassium channel toxin alpha-KTx 13.2 (28 aa).

Disulfide bonds link Cys2–Cys19, Cys6–Cys24, and Cys10–Cys26. The segment at 17–24 is interaction with Ca(2+)-activated K(+) channels; that stretch reads IKCINGSC.

Belongs to the short scorpion toxin superfamily. Potassium channel inhibitor family. Alpha-KTx 13 subfamily. As to expression, expressed by the venom gland.

Its subcellular location is the secreted. Its function is as follows. Potent and selective inhibitor of Kv1.2/KCNA2 potassium channels. The polypeptide is Potassium channel toxin alpha-KTx 13.2 (Orthochirus scrobiculosus (Central Asian scorpion)).